A 113-amino-acid polypeptide reads, in one-letter code: Large ribosomal subunit protein uL22 (113 aa).

This sequence belongs to the universal ribosomal protein uL22 family. In terms of assembly, part of the 50S ribosomal subunit.

In terms of biological role, this protein binds specifically to 23S rRNA; its binding is stimulated by other ribosomal proteins, e.g. L4, L17, and L20. It is important during the early stages of 50S assembly. It makes multiple contacts with different domains of the 23S rRNA in the assembled 50S subunit and ribosome. The globular domain of the protein is located near the polypeptide exit tunnel on the outside of the subunit, while an extended beta-hairpin is found that lines the wall of the exit tunnel in the center of the 70S ribosome. This is Large ribosomal subunit protein uL22 from Solibacter usitatus (strain Ellin6076).